Consider the following 308-residue polypeptide: Zinc finger CCCH domain-containing protein 15 (308 aa).

Residues 1–21 (MENKIAPFSYSGSSAGNSSSG) are disordered. Positions 9–21 (SYSGSSAGNSSSG) are enriched in low complexity. The stretch at 56–91 (TRLHEASLEAEALRLENTELRSMNLRLKNELNSLIR) forms a coiled coil. A disordered region spans residues 110–190 (LSIGGNDADE…GTVTKPGTCG (81 aa)). Phosphoserine is present on Ser111. Positions 148-164 (RSSLPKSISVRSNGYSK) are enriched in polar residues. 2 C3H1-type zinc fingers span residues 222 to 250 (MTKTELCNKWQETGTCPYGDHCQFAHGIK) and 260 to 288 (RYKTEVCRMVLAGDNCPYGHRCHFRHSLS).

Post-translationally, phosphorylated at Ser-111 by ASK7/BIN2 in the cytoplasm in the absence of brassinosteroids (BRs). As to expression, highly expressed in secondary cell wall-forming tissues and the xylem cells of roots. Expressed predominantly in inflorescence stems, flowers and siliques. Highly expressed in the basal portion of stems, where cells are undergoing secondary cell wall thickening. Highly expressed in meiocytes and tapetum from anthers.

It is found in the cytoplasm. The protein localises to the nucleus. Functionally, functions probably as a transcriptional factor that activates genes involved in secondary cell wall biosynthesis. Functions redudantly with C3H14 to regulate secondary cell wall formation. C3H14 and C3H15 have overlapping roles in the regulation of secondary cell wall formation and anther development. C3H14 may contribute more to secondary cell wall thickening while C3H15 could be more important in anther development. May regulate at both the transcriptional and post-transcriptional levels the expression of many genes involved in various biological processes, particularly those associated with cell wall metabolism and pollen development. Involved in the regulation of callose metabolism in male meiocytes, in integrity of newly formed microspores, and promotes male fertility. May be involved in the regulation of the callose synthesis genes CALS5 and CALS12, the potential degradation of callose walls-related genes A6 and MYB80, as well as other putative beta-1,3-glucanase genes. Negatively regulates cell elongation by inhibiting brassinosteroid (BR) signaling. Functions downstream of the BRI1 receptor as a negative regulator in the BR pathway. This is Zinc finger CCCH domain-containing protein 15 from Arabidopsis thaliana (Mouse-ear cress).